The chain runs to 441 residues: tRNA-2-methylthio-N(6)-dimethylallyladenosine synthase (441 aa).

The region spanning 5–121 (KKLYLETFGC…LQGMVAAAEE (117 aa)) is the MTTase N-terminal domain. Residues cysteine 14, cysteine 50, cysteine 84, cysteine 159, cysteine 163, and cysteine 166 each contribute to the [4Fe-4S] cluster site. Residues 145 to 375 (AEGGVTRFVT…QAAQKKTTLA (231 aa)) form the Radical SAM core domain. One can recognise a TRAM domain in the interval 378–440 (RSLEGTVQKV…QTLLKGEIVH (63 aa)).

It belongs to the methylthiotransferase family. MiaB subfamily. Monomer. It depends on [4Fe-4S] cluster as a cofactor.

It is found in the cytoplasm. It carries out the reaction N(6)-dimethylallyladenosine(37) in tRNA + (sulfur carrier)-SH + AH2 + 2 S-adenosyl-L-methionine = 2-methylsulfanyl-N(6)-dimethylallyladenosine(37) in tRNA + (sulfur carrier)-H + 5'-deoxyadenosine + L-methionine + A + S-adenosyl-L-homocysteine + 2 H(+). Functionally, catalyzes the methylthiolation of N6-(dimethylallyl)adenosine (i(6)A), leading to the formation of 2-methylthio-N6-(dimethylallyl)adenosine (ms(2)i(6)A) at position 37 in tRNAs that read codons beginning with uridine. The polypeptide is tRNA-2-methylthio-N(6)-dimethylallyladenosine synthase (Citrifermentans bemidjiense (strain ATCC BAA-1014 / DSM 16622 / JCM 12645 / Bem) (Geobacter bemidjiensis)).